The primary structure comprises 218 residues: Thiopurine S-methyltransferase (218 aa).

S-adenosyl-L-methionine is bound by residues tryptophan 10, leucine 45, glutamate 66, and arginine 123.

The protein belongs to the class I-like SAM-binding methyltransferase superfamily. TPMT family.

It localises to the cytoplasm. The enzyme catalyses S-adenosyl-L-methionine + a thiopurine = S-adenosyl-L-homocysteine + a thiopurine S-methylether.. The chain is Thiopurine S-methyltransferase from Xanthomonas euvesicatoria pv. vesicatoria (strain 85-10) (Xanthomonas campestris pv. vesicatoria).